A 490-amino-acid chain; its full sequence is Cytochrome P450 71B28 (490 aa).

The helical transmembrane segment at 1 to 21 (MSVFLCFLCLLPLILIFLKNL) threads the bilayer. Cysteine 440 provides a ligand contact to heme.

Belongs to the cytochrome P450 family. Requires heme as cofactor.

It is found in the membrane. This chain is Cytochrome P450 71B28 (CYP71B28), found in Arabidopsis thaliana (Mouse-ear cress).